Reading from the N-terminus, the 36-residue chain is GDCHKFLGWCRGEKDPCCEHLTCHVKHGWCVWDGTI.

Cystine bridges form between Cys-3-Cys-18, Cys-10-Cys-23, and Cys-17-Cys-30. An Isoleucine amide modification is found at Ile-36.

It belongs to the neurotoxin 10 (Hwtx-1) family. Expressed by the venom gland.

Its subcellular location is the secreted. Functionally, selective inhibitor of voltage-gated potassium channel Kv10.1/KCNH1/EAG1 (IC(50)=637 nM). It acts by shifting the voltage dependence of channel activation in a depolarising direction. It shows a 100% inhibition at saturating concentrations, shows fast on-rates and is reversible. It also slightly affects channel inactivation, when the membrane is highly depolarised (&gt;+80 mV). The polypeptide is Kappa-theraphotoxin-Aa1a (Avicularia aurantiaca (Yellow-banded pinktoe tarantula)).